The primary structure comprises 947 residues: Nonribosomal peptide synthetase ucdA (947 aa).

An adenylation (A) domain region spans residues 25 to 413 (YSPHANAGYC…AGPVVFKEYF (389 aa)). One can recognise a Carrier domain in the interval 585–665 (APENEFERDL…DLGTALRKLQ (81 aa)). Ser623 is subject to O-(pantetheine 4'-phosphoryl)serine. The interval 684–934 (PLWLVHPGVG…MLSPEHVFDF (251 aa)) is thioesterase (TE) domain.

The protein belongs to the NRP synthetase family.

It catalyses the reaction 2 3-(4-hydroxyphenyl)pyruvate + 2 ATP = atromentin + 2 AMP + 2 diphosphate + H(+). It participates in secondary metabolite biosynthesis. Nonribosomal peptide synthetase that mediates the biosynthesis of usterphenyllins and uscandidusins, p-terphenyl derivatives. Within the pathway, ucdA condenses two 4-hydroxyphenylpyruvate (HPPA) units to produce atromentin. UcdA first activates HPPA through its A domain to AMP-HPPA. The HPPA unit is then loaded to the T domain and eventually transferred to the TE domain. Another HPPA unit is then loaded onto the T domain. The TE domain then catalyzes the condensation of the two HPPA units and the release of atromentin via cyclization. The pathway begin with the biosynthesis of 4-hydroxyphenylpyruvate (HPPA) from L-tyrosine, possibly by the aminotransferase ucdG. The nonribosomal peptide synthetase ucdA then condenses two HPPA units to produce atromentin. The key step in this pathway is the reduction and dehydration of atromentin to form a terphenyl triol intermediate, performed by the NAD-dependent dehydrogenase ucdB. Further O-methylation by the methyltransferase ucdC forms terphenyllin carrying two methoxy moieties at C-9 and C-12, and subsequent dihydroxylation at C-3 of ring A and C-15 of ring C by the flavin-dependent oxygenase ucdD leads to 3,15-dihydroxyterphenyllin. Prenylation by ucdE at position C-5 of ring A forms usterphenyllin B, and is followed by a second prenylation at position C-14 of ring C to form usterphenyllin A. The following furan ring formation that leads to uscandidusins A and B was proven to be an unexpected spontaneous non-enzymatic reaction. The protein is Nonribosomal peptide synthetase ucdA of Aspergillus ustus.